Here is a 221-residue protein sequence, read N- to C-terminus: UPF0758 protein KPN78578_39390 (221 aa).

Positions 99-221 constitute an MPN domain; it reads ALVTPSMTRE…YVSFAERGWI (123 aa). His170, His172, and Asp183 together coordinate Zn(2+). The short motif at 170–183 is the JAMM motif element; sequence HNHPSGSPEPSQAD.

Belongs to the UPF0758 family. YicR subfamily.

In Klebsiella pneumoniae subsp. pneumoniae (strain ATCC 700721 / MGH 78578), this protein is UPF0758 protein KPN78578_39390.